Reading from the N-terminus, the 760-residue chain is Probable ubiquitin carboxyl-terminal hydrolase creB (760 aa).

Positions 1–28 (MGSFLRSFRNNAGSTTPSVGAVPAKKEV) are disordered. Positions 8–18 (FRNNAGSTTPS) are enriched in polar residues. One can recognise a USP domain in the interval 55-469 (YGMENYGNTC…CAYVLFYQET (415 aa)). The active-site Nucleophile is the cysteine 64. Disordered stretches follow at residues 114-146 (AEAQ…DSPD) and 242-270 (PAAI…KTPN). The span at 258–270 (VDQSASSGSKTPN) shows a compositional bias: polar residues. Histidine 420 functions as the Proton acceptor in the catalytic mechanism. Residues 520–760 (EEHNRPNGLK…LRKKSFSILS (241 aa)) form a disordered region. The stretch at 575–635 (KSDVQGKKER…AALEASKASK (61 aa)) forms a coiled coil. Basic and acidic residues-rich tracts occupy residues 578 to 626 (VQGK…ELKA), 635 to 651 (KAQE…KDKL), and 708 to 742 (DPKD…ERTG). Over residues 743–760 (HGKWRSFSLRKKSFSILS) the composition is skewed to basic residues.

It belongs to the peptidase C19 family. As to quaternary structure, interacts with creA, creC and qutD.

It catalyses the reaction Thiol-dependent hydrolysis of ester, thioester, amide, peptide and isopeptide bonds formed by the C-terminal Gly of ubiquitin (a 76-residue protein attached to proteins as an intracellular targeting signal).. In terms of biological role, ubiquitin thioesterase component of the regulatory network controlling carbon source utilization through ubiquitination and deubiquitination involving creA, creB, creC, creD and acrB. Deubiquitinates the creA catabolic repressor and the quinate permease qutD. Also plays a role in response to carbon starvation and the control of extracellular proteases activity. The chain is Probable ubiquitin carboxyl-terminal hydrolase creB (creB) from Aspergillus clavatus (strain ATCC 1007 / CBS 513.65 / DSM 816 / NCTC 3887 / NRRL 1 / QM 1276 / 107).